A 1587-amino-acid polypeptide reads, in one-letter code: NHS-like protein 1 (1587 aa).

Residue Ser-24 is modified to Phosphoserine. Disordered stretches follow at residues 140–163 (FAAGSSPCDDYQDEDTEADRKCSL) and 176–202 (RPKTPTSGDFSDLHTQTNWTKSLPLPT). Polar residues predominate over residues 179 to 196 (TPTSGDFSDLHTQTNWTK). 2 positions are modified to phosphoserine: Ser-197 and Ser-328. The span at 431 to 446 (SAGQLDSRTPGSSSYS) shows a compositional bias: polar residues. Disordered regions lie at residues 431–470 (SAGQLDSRTPGSSSYSKIKPRDRPTPRCSVKDDHQSPRHH) and 549–584 (SEPWEYKTSSNGRASPLKPHLATPGCSTPTSNVSSC). Positions 449 to 470 (KPRDRPTPRCSVKDDHQSPRHH) are enriched in basic and acidic residues. At Ser-563 the chain carries Phosphoserine. The segment covering 573-584 (GCSTPTSNVSSC) has biased composition (polar residues). Ser-629 bears the Phosphoserine mark. Disordered stretches follow at residues 661–687 (KAKKPPLPPSRTDSLRRIPKKNNQTNG), 705–767 (SLPG…SSVK), and 789–1059 (NPTG…RPPM). The segment covering 705 to 720 (SLPGKGGSSPSQSPCS) has biased composition (low complexity). 4 stretches are compositionally biased toward polar residues: residues 730–750 (SRSQSIVSEGSSLTSTTTPNV), 757–767 (TPSQSDTSSVK), 792–801 (GGCSANTEAA), and 838–855 (RVTSPSSGYSSQSNTPTA). Positions 885–911 (SLISSMSISSSSTSLSSNTSTEGSGTM) are enriched in low complexity. 3 stretches are compositionally biased toward pro residues: residues 923-934 (APPPPPLPPLPS), 958-972 (PLPPSPMFPPPPPEA), and 998-1021 (SLPPVPAPPPFLPSSEPPPAPPLD). Positions 1040 to 1055 (SSREALRRPANKEEGC) are enriched in basic and acidic residues. A Phosphoserine modification is found at Ser-1079. Disordered regions lie at residues 1083-1534 (AVLF…ARRA) and 1565-1587 (VDGIGRAEGNGPSEQCGGTEQKS). Polar residues-rich tracts occupy residues 1089–1099 (PSAQEQRTPTA) and 1112–1141 (SRNSINEMESESQAASVTSSLPMPAKSQSQ). Phosphoserine occurs at positions 1157 and 1218. Over residues 1222–1234 (AEGEAVRSQEEKS) the composition is skewed to basic and acidic residues. A compositionally biased stretch (polar residues) spans 1275-1285 (QPNTSPGPTQE). The segment covering 1360-1370 (GRKDSEDDHTR) has biased composition (basic and acidic residues). Ser-1373 and Ser-1375 each carry phosphoserine. Residue Thr-1379 is modified to Phosphothreonine. A compositionally biased stretch (polar residues) spans 1392 to 1409 (QVGSIQRSIKKSTTSSDN). Basic and acidic residues predominate over residues 1434–1447 (KSTDPRFQRSRSEP). Composition is skewed to low complexity over residues 1448 to 1460 (SADSPDSPSSCSP) and 1484 to 1503 (SGPRYSRSRTPPSAASSRYS). Residues 1576-1587 (PSEQCGGTEQKS) show a composition bias toward polar residues.

It belongs to the NHS family.

In Mus musculus (Mouse), this protein is NHS-like protein 1 (Nhsl1).